Consider the following 112-residue polypeptide: Nitrogenase iron-iron protein delta chain (112 aa).

Hexamer of two alpha, two beta, and two delta chains. Iron-sulfur cluster serves as cofactor.

The catalysed reaction is N2 + 8 reduced [2Fe-2S]-[ferredoxin] + 16 ATP + 16 H2O = H2 + 8 oxidized [2Fe-2S]-[ferredoxin] + 2 NH4(+) + 16 ADP + 16 phosphate + 6 H(+). Functionally, the key enzymatic reactions in nitrogen fixation are catalyzed by the nitrogenase complex, which has 2 components: the iron protein (component 2) and a component 1 which is either a molybdenum-iron protein, a vanadium-iron, or an iron-iron protein. The chain is Nitrogenase iron-iron protein delta chain (anfG) from Azomonas macrocytogenes (Azotobacter macrocytogenes).